The following is a 303-amino-acid chain: Glycine--tRNA ligase alpha subunit (303 aa).

Belongs to the class-II aminoacyl-tRNA synthetase family. As to quaternary structure, tetramer of two alpha and two beta subunits.

The protein localises to the cytoplasm. It catalyses the reaction tRNA(Gly) + glycine + ATP = glycyl-tRNA(Gly) + AMP + diphosphate. This Streptococcus equi subsp. zooepidemicus (strain H70) protein is Glycine--tRNA ligase alpha subunit.